The sequence spans 284 residues: Bifunctional protein FolD (284 aa).

Residues 165-167 (GRS), Ser190, and Val231 contribute to the NADP(+) site.

This sequence belongs to the tetrahydrofolate dehydrogenase/cyclohydrolase family. Homodimer.

It carries out the reaction (6R)-5,10-methylene-5,6,7,8-tetrahydrofolate + NADP(+) = (6R)-5,10-methenyltetrahydrofolate + NADPH. The catalysed reaction is (6R)-5,10-methenyltetrahydrofolate + H2O = (6R)-10-formyltetrahydrofolate + H(+). It participates in one-carbon metabolism; tetrahydrofolate interconversion. Its function is as follows. Catalyzes the oxidation of 5,10-methylenetetrahydrofolate to 5,10-methenyltetrahydrofolate and then the hydrolysis of 5,10-methenyltetrahydrofolate to 10-formyltetrahydrofolate. The protein is Bifunctional protein FolD of Geobacillus thermodenitrificans (strain NG80-2).